Consider the following 219-residue polypeptide: Transcriptional regulator AcuR (219 aa).

A disordered region spans residues 1–25 (MPLTDTPPSVPQKPRRGRPRGAPDA). The 61-residue stretch at 26 to 86 (SLAHQSLIRA…ALIEAYDTYF (61 aa)) folds into the HTH tetR-type domain. Positions 49-68 (GVDEILKAARVPKGSFYHYF) form a DNA-binding region, H-T-H motif.

A transcriptional repressor for its operon. Probably binds to 2 operator sequences in the promoter. This chain is Transcriptional regulator AcuR (acuR), found in Cereibacter sphaeroides (strain ATCC 17023 / DSM 158 / JCM 6121 / CCUG 31486 / LMG 2827 / NBRC 12203 / NCIMB 8253 / ATH 2.4.1.) (Rhodobacter sphaeroides).